Consider the following 81-residue polypeptide: Photosystem I iron-sulfur center (81 aa).

4Fe-4S ferredoxin-type domains are found at residues 2–31 (AHSV…MVPW) and 39–68 (IASA…VRVY). Residues Cys-11, Cys-14, Cys-17, Cys-21, Cys-48, Cys-51, Cys-54, and Cys-58 each coordinate [4Fe-4S] cluster.

As to quaternary structure, the eukaryotic PSI reaction center is composed of at least 11 subunits. Requires [4Fe-4S] cluster as cofactor.

It is found in the plastid. It localises to the chloroplast thylakoid membrane. It catalyses the reaction reduced [plastocyanin] + hnu + oxidized [2Fe-2S]-[ferredoxin] = oxidized [plastocyanin] + reduced [2Fe-2S]-[ferredoxin]. Apoprotein for the two 4Fe-4S centers FA and FB of photosystem I (PSI); essential for photochemical activity. FB is the terminal electron acceptor of PSI, donating electrons to ferredoxin. The C-terminus interacts with PsaA/B/D and helps assemble the protein into the PSI complex. Required for binding of PsaD and PsaE to PSI. PSI is a plastocyanin-ferredoxin oxidoreductase, converting photonic excitation into a charge separation, which transfers an electron from the donor P700 chlorophyll pair to the spectroscopically characterized acceptors A0, A1, FX, FA and FB in turn. The chain is Photosystem I iron-sulfur center from Gnetum parvifolium (Small-leaved jointfir).